A 184-amino-acid polypeptide reads, in one-letter code: Ribosome-recycling factor (184 aa).

The protein belongs to the RRF family.

The protein localises to the cytoplasm. Responsible for the release of ribosomes from messenger RNA at the termination of protein biosynthesis. May increase the efficiency of translation by recycling ribosomes from one round of translation to another. This is Ribosome-recycling factor from Stenotrophomonas maltophilia (strain K279a).